We begin with the raw amino-acid sequence, 34 residues long: Cytochrome b6-f complex subunit 7 (34 aa).

The helical transmembrane segment at 9 to 27 (AILSFGLIFVGWGLGALLL) threads the bilayer.

Belongs to the PetM family. In terms of assembly, the 4 large subunits of the cytochrome b6-f complex are cytochrome b6, subunit IV (17 kDa polypeptide, PetD), cytochrome f and the Rieske protein, while the 4 small subunits are PetG, PetL, PetM and PetN. The complex functions as a dimer.

Its subcellular location is the cellular thylakoid membrane. Its function is as follows. Component of the cytochrome b6-f complex, which mediates electron transfer between photosystem II (PSII) and photosystem I (PSI), cyclic electron flow around PSI, and state transitions. The protein is Cytochrome b6-f complex subunit 7 of Nostoc punctiforme (strain ATCC 29133 / PCC 73102).